We begin with the raw amino-acid sequence, 196 residues long: Thymidine kinase (196 aa).

Residues 9–16 and 87–90 contribute to the ATP site; these read SAMNAGKS and DECQ. The active-site Proton acceptor is the E88. Positions 145, 147, 182, and 185 each coordinate Zn(2+).

Belongs to the thymidine kinase family. In terms of assembly, homotetramer.

It localises to the cytoplasm. It catalyses the reaction thymidine + ATP = dTMP + ADP + H(+). This Yersinia pestis protein is Thymidine kinase.